Reading from the N-terminus, the 497-residue chain is Guanosine-5'-triphosphate,3'-diphosphate pyrophosphatase (497 aa).

Belongs to the GppA/Ppx family. GppA subfamily.

The catalysed reaction is guanosine 3'-diphosphate 5'-triphosphate + H2O = guanosine 3',5'-bis(diphosphate) + phosphate + H(+). The protein operates within purine metabolism; ppGpp biosynthesis; ppGpp from GTP: step 2/2. In terms of biological role, catalyzes the conversion of pppGpp to ppGpp. Guanosine pentaphosphate (pppGpp) is a cytoplasmic signaling molecule which together with ppGpp controls the 'stringent response', an adaptive process that allows bacteria to respond to amino acid starvation, resulting in the coordinated regulation of numerous cellular activities. The sequence is that of Guanosine-5'-triphosphate,3'-diphosphate pyrophosphatase from Vibrio atlanticus (strain LGP32) (Vibrio splendidus (strain Mel32)).